The chain runs to 459 residues: E3 ubiquitin-protein ligase RNF25 (459 aa).

The 111-residue stretch at 18–128 (SEVEVLESIY…EKGKEILTDN (111 aa)) folds into the RWD domain. Cys135, Cys138, Cys153, His155, His158, Cys161, Cys198, and Cys201 together coordinate Zn(2+). The segment at 135 to 202 (CVICLYGFQE…AVGVQCPVCR (68 aa)) adopts an RING-type zinc-finger fold. 2 disordered regions span residues 268 to 309 (PPAP…PPLP) and 322 to 459 (TRSN…KDGS). Positions 282–303 (KGSQPPSTLAAELSTSPAVQST) are enriched in polar residues. Composition is skewed to basic and acidic residues over residues 349 to 370 (QPERRHPKGGECHAPKGTRDTQ), 378 to 389 (PLKEPMDLKPEP), 413 to 424 (RTRDCVRWERSK), and 446 to 459 (TRRESLGLESKDGS). At Ser450 the chain carries Phosphoserine.

This sequence belongs to the RNF25 family. Interacts with UBE2D2, and may also interact with UBE2E1 and UBE2E3. Interacts with RELA/p65. In terms of processing, ubiquitinated; autoubiquitinated.

The protein localises to the cytoplasm. It carries out the reaction S-ubiquitinyl-[E2 ubiquitin-conjugating enzyme]-L-cysteine + [acceptor protein]-L-lysine = [E2 ubiquitin-conjugating enzyme]-L-cysteine + N(6)-ubiquitinyl-[acceptor protein]-L-lysine.. It participates in protein modification; protein ubiquitination. E3 ubiquitin-protein ligase that plays a key role in the RNF14-RNF25 translation quality control pathway, a pathway that takes place when a ribosome has stalled during translation, and which promotes ubiquitination and degradation of translation factors on stalled ribosomes. Catalyzes ubiquitination of RPS27A in response to ribosome collisions, promoting activation of RNF14. RNF25 catalyzes ubiquitination of other ribosomal proteins on stalled ribosomes, such as RPL0, RPL1, RPL12, RPS13 and RPS17. Also involved in ubiquitination and degradation of stalled ETF1/eRF1. Independently of its function in the response to stalled ribosomes, mediates ubiquitination and subsequent proteasomal degradation of NKD2. May also stimulate transcription mediated by NF-kappa-B via its interaction with RELA/p65. This is E3 ubiquitin-protein ligase RNF25 from Homo sapiens (Human).